A 185-amino-acid chain; its full sequence is piRNA-mediated silencing protein C19orf84 homolog (185 aa).

2 disordered regions span residues 1–38 (MDELEDGALSNGDNLSLPSAGTESWPTSATPGLPPSLL) and 93–185 (HIWP…EADY). The span at 11–25 (NGDNLSLPSAGTESW) shows a compositional bias: polar residues. The span at 26-38 (PTSATPGLPPSLL) shows a compositional bias: low complexity. A compositionally biased stretch (basic residues) spans 118-130 (RPSRGWGRGRGRG). The span at 139-150 (GPERAEERERNM) shows a compositional bias: basic and acidic residues.

Interacts with SPOCD1.

The protein localises to the nucleus. The protein resides in the nucleoplasm. In terms of biological role, protein adapter involved in piRNA-directed transposon methylation by connecting PIWIL4-piRNA and DNA methylation machineries. The PIWIL4-piRNA pathway plays a central role during spermatogenesis by directing transposon DNA methylation and silencing, thereby preventing their mobilization, which is essential for the germline integrity. This chain is piRNA-mediated silencing protein C19orf84 homolog, found in Mus musculus (Mouse).